Reading from the N-terminus, the 30-residue chain is Truncated interleukin-1-binding protein (30 aa).

Positions 1–18 are cleaved as a signal peptide; sequence MSILPVIFLPIFFYSSFV.

This sequence belongs to the interleukin-1 receptor family.

The chain is Truncated interleukin-1-binding protein from Vaccinia virus (strain Copenhagen) (VACV).